We begin with the raw amino-acid sequence, 401 residues long: Argininosuccinate synthase (401 aa).

ATP-binding positions include 7–15 (AYSGGLDTS) and Ala34. L-citrulline is bound by residues Tyr85 and Ser90. Gly115 contributes to the ATP binding site. L-aspartate-binding residues include Thr117, Asn121, and Asp122. An L-citrulline-binding site is contributed by Asn121. The L-citrulline site is built by Arg125, Ser174, Ser183, Glu259, and Tyr271.

It belongs to the argininosuccinate synthase family. Type 1 subfamily. As to quaternary structure, homotetramer.

Its subcellular location is the cytoplasm. It carries out the reaction L-citrulline + L-aspartate + ATP = 2-(N(omega)-L-arginino)succinate + AMP + diphosphate + H(+). It functions in the pathway amino-acid biosynthesis; L-arginine biosynthesis; L-arginine from L-ornithine and carbamoyl phosphate: step 2/3. The chain is Argininosuccinate synthase from Pelotomaculum thermopropionicum (strain DSM 13744 / JCM 10971 / SI).